The sequence spans 446 residues: MRLPVPDQVLPADRLGRVHFVGIGGAGLSGIARIMLARGITVSGSDGTDSPTLTALRELGARVHLGHDAAHVHDVDTLVVSTAVREDNPEYVEAVRQGLRVLPRSAALAAVMAGRRVVAVAGTHGKTTTTSLLTVALQAAGADPTYAIGGDLAATGVNAAEGTGDLFVAEADESDGAFLHYSPYAAVVTNIEADHLDQWGTPEAYAAAFDEFADTLAPDGFLVCVADDPGAAALAERHRAAGRRVVTVSARDAGALDGVTLWSPGEHYLADALAALAAGVELGYAAADLARGLASYTGTKRRMERKGEAGGVRVYDSYAHHPTEIAGDLQAARAVAGSGRVVVAFQPHLVSRTRIFGTAMGRALGAADEVVVLDVYLAREDPDPEVTGALVAGAVPLPAERVAYVADFDAVAAELVARARPGDLVLTLGAGTVTAIGPRVLGLLDG.

122-128 is an ATP binding site; that stretch reads GTHGKTT.

The protein belongs to the MurCDEF family.

It localises to the cytoplasm. The catalysed reaction is UDP-N-acetyl-alpha-D-muramate + L-alanine + ATP = UDP-N-acetyl-alpha-D-muramoyl-L-alanine + ADP + phosphate + H(+). It participates in cell wall biogenesis; peptidoglycan biosynthesis. Functionally, cell wall formation. This chain is UDP-N-acetylmuramate--L-alanine ligase, found in Nocardioides sp. (strain ATCC BAA-499 / JS614).